A 208-amino-acid chain; its full sequence is Coat protein (208 aa).

This sequence belongs to the potexvirus capsid protein family.

Its subcellular location is the virion. In terms of biological role, required for genome encapsidation. Forms ribonucleoprotein complexes along with TGB1 helicase and viral RNA. The chain is Coat protein from Trifolium (WCMV).